Reading from the N-terminus, the 359-residue chain is F-box/kelch-repeat protein At1g15670 (359 aa).

The F-box domain occupies 2-49; that stretch reads ELIPDLPETVAYECLLRSSYKQFPLMASVCKLWQREISLSDFFRHRKA. 5 Kelch repeats span residues 119-167, 170-217, 219-269, 271-310, and 313-358; these read DLVV…ASDS, NVFV…FHAG, FHVI…CAAG, NGDLYACCRRDLMMMKDDTWYKVGNLPADVCNVSYVAIRR, and NLVV…CFLE.

The chain is F-box/kelch-repeat protein At1g15670 from Arabidopsis thaliana (Mouse-ear cress).